The chain runs to 423 residues: Gamma-glutamyl phosphate reductase (423 aa).

This sequence belongs to the gamma-glutamyl phosphate reductase family.

It is found in the cytoplasm. It carries out the reaction L-glutamate 5-semialdehyde + phosphate + NADP(+) = L-glutamyl 5-phosphate + NADPH + H(+). It functions in the pathway amino-acid biosynthesis; L-proline biosynthesis; L-glutamate 5-semialdehyde from L-glutamate: step 2/2. In terms of biological role, catalyzes the NADPH-dependent reduction of L-glutamate 5-phosphate into L-glutamate 5-semialdehyde and phosphate. The product spontaneously undergoes cyclization to form 1-pyrroline-5-carboxylate. The polypeptide is Gamma-glutamyl phosphate reductase (Pseudomonas putida (strain W619)).